An 80-amino-acid polypeptide reads, in one-letter code: Exodeoxyribonuclease 7 small subunit (80 aa).

The protein belongs to the XseB family. In terms of assembly, heterooligomer composed of large and small subunits.

The protein localises to the cytoplasm. It catalyses the reaction Exonucleolytic cleavage in either 5'- to 3'- or 3'- to 5'-direction to yield nucleoside 5'-phosphates.. Its function is as follows. Bidirectionally degrades single-stranded DNA into large acid-insoluble oligonucleotides, which are then degraded further into small acid-soluble oligonucleotides. This is Exodeoxyribonuclease 7 small subunit from Phenylobacterium zucineum (strain HLK1).